The primary structure comprises 342 residues: L-threonine 3-dehydrogenase (342 aa).

Cys38 lines the Zn(2+) pocket. Active-site charge relay system residues include Thr40 and His43. Zn(2+) contacts are provided by His63, Glu64, Cys93, Cys96, Cys99, and Cys107. Residues Ile175, Asp195, Arg200, 262-264, and 286-287 contribute to the NAD(+) site; these read LGI and IY.

It belongs to the zinc-containing alcohol dehydrogenase family. As to quaternary structure, homotetramer. Zn(2+) serves as cofactor.

It is found in the cytoplasm. It carries out the reaction L-threonine + NAD(+) = (2S)-2-amino-3-oxobutanoate + NADH + H(+). It participates in amino-acid degradation; L-threonine degradation via oxydo-reductase pathway; glycine from L-threonine: step 1/2. Functionally, catalyzes the NAD(+)-dependent oxidation of L-threonine to 2-amino-3-ketobutyrate. This chain is L-threonine 3-dehydrogenase, found in Burkholderia vietnamiensis (strain G4 / LMG 22486) (Burkholderia cepacia (strain R1808)).